The chain runs to 102 residues: MKFTIIALCLALSLVGMTSSEKLLDRIRANSLENLSRLVPSLCLLPSGRGNCDSQILRYFYNATSHTCEVFLYSGCNGNGNNFDSLECCLKTCRLNKYRNNN.

The N-terminal stretch at 1 to 20 (MKFTIIALCLALSLVGMTSS) is a signal peptide. 2 N-linked (GlcNAc...) asparagine glycosylation sites follow: N34 and N62. A BPTI/Kunitz inhibitor domain is found at 43–93 (CLLPSGRGNCDSQILRYFYNATSHTCEVFLYSGCNGNGNNFDSLECCLKTC). Cystine bridges form between C43–C93, C52–C76, and C68–C89.

N-glycosylated. Expressed by the mammary gland.

It is found in the secreted. In Trichosurus vulpecula (Brush-tailed possum), this protein is Early lactation protein (ELP).